The chain runs to 185 residues: Ribosome-recycling factor (185 aa).

This sequence belongs to the RRF family.

The protein localises to the cytoplasm. Responsible for the release of ribosomes from messenger RNA at the termination of protein biosynthesis. May increase the efficiency of translation by recycling ribosomes from one round of translation to another. This chain is Ribosome-recycling factor, found in Shewanella loihica (strain ATCC BAA-1088 / PV-4).